The primary structure comprises 123 residues: Large ribosomal subunit protein uL22c (123 aa).

It belongs to the universal ribosomal protein uL22 family. As to quaternary structure, part of the 50S ribosomal subunit.

It localises to the plastid. The protein localises to the chloroplast. Functionally, this protein binds specifically to 23S rRNA. Its function is as follows. The globular domain of the protein is located near the polypeptide exit tunnel on the outside of the subunit, while an extended beta-hairpin is found that lines the wall of the exit tunnel in the center of the 70S ribosome. This chain is Large ribosomal subunit protein uL22c (rpl22), found in Illicium oligandrum (Star anise).